The following is a 460-amino-acid chain: MAPRSRRRRHKKPPSSVAPIIMAPTTIVTPVPLTPSKPGPSIDTLGFFSLDDNVPGLSQLILQKLNMKSYEEYKLVVDGGTPVSGFGFRCPQEMFQRMEDTFRFCAHCRALPSGLSDSKVLRHCKRCRNVYYCGPECQKSDWPAHRRVCQELRLVAVDRLMEWLLVTGDFVLPSGPWPWPPEAVQDWDSWFSMKGLHLDATLDAVLVSHAVTTLWASVGRPRPDPDVLQGSLKRLLTDVLSRPLTLGLGLRALGIDVRRTGGSTVHVVGASHVETFLTRPGDYDELGYMFPGHLGLRVVMVGVDVATGFSQSTSTSPLEPGTIQLSAHRGLYHDFWEEQVETGQTHHPDLVAAFHPGFHSSPDLMEAWLPTLLLLRDYKIPTLITVYSHQELVSSLQILVELDTHITAFGSNPFMSLKPEQVYSSPNKQPVYCSAYYIMFLGSSCQLDNRQLEEKVDGGI.

Zn(2+) contacts are provided by Cys-105, Cys-108, Cys-124, Cys-127, Cys-133, Cys-137, His-145, and Cys-149. Residues 105 to 149 (CAHCRALPSGLSDSKVLRHCKRCRNVYYCGPECQKSDWPAHRRVC) form an MYND-type zinc finger.

The protein is Putative protein MSS51 homolog, mitochondrial (MSS51) of Homo sapiens (Human).